Here is a 342-residue protein sequence, read N- to C-terminus: Glycerol-3-phosphate dehydrogenase [NAD(P)+] (342 aa).

NADPH contacts are provided by Ser-13, Trp-14, and Lys-108. Sn-glycerol 3-phosphate is bound by residues Lys-108, Gly-139, and Ser-141. Ala-143 lines the NADPH pocket. 5 residues coordinate sn-glycerol 3-phosphate: Lys-194, Asp-247, Ser-257, Arg-258, and Asn-259. Lys-194 serves as the catalytic Proton acceptor. Position 258 (Arg-258) interacts with NADPH. The NADPH site is built by Val-282 and Glu-284.

It belongs to the NAD-dependent glycerol-3-phosphate dehydrogenase family.

The protein localises to the cytoplasm. The enzyme catalyses sn-glycerol 3-phosphate + NAD(+) = dihydroxyacetone phosphate + NADH + H(+). The catalysed reaction is sn-glycerol 3-phosphate + NADP(+) = dihydroxyacetone phosphate + NADPH + H(+). The protein operates within membrane lipid metabolism; glycerophospholipid metabolism. Functionally, catalyzes the reduction of the glycolytic intermediate dihydroxyacetone phosphate (DHAP) to sn-glycerol 3-phosphate (G3P), the key precursor for phospholipid synthesis. This Lactococcus lactis subsp. cremoris (strain SK11) protein is Glycerol-3-phosphate dehydrogenase [NAD(P)+].